Consider the following 517-residue polypeptide: Crotonobetaine/carnitine--CoA ligase (517 aa).

Belongs to the ATP-dependent AMP-binding enzyme family.

It carries out the reaction 4-(trimethylamino)butanoate + ATP + CoA = 4-(trimethylamino)butanoyl-CoA + AMP + diphosphate. It catalyses the reaction crotonobetaine + ATP + CoA = crotonobetainyl-CoA + AMP + diphosphate. The enzyme catalyses (R)-carnitine + ATP + CoA = (R)-carnitinyl-CoA + AMP + diphosphate. It functions in the pathway amine and polyamine metabolism; carnitine metabolism. Catalyzes the transfer of CoA to carnitine, generating the initial carnitinyl-CoA needed for the CaiB reaction cycle. Also has activity toward crotonobetaine and gamma-butyrobetaine. The polypeptide is Crotonobetaine/carnitine--CoA ligase (Escherichia coli O8 (strain IAI1)).